Consider the following 305-residue polypeptide: Sulfate adenylyltransferase subunit 2 (305 aa).

This sequence belongs to the PAPS reductase family. CysD subfamily. As to quaternary structure, heterodimer composed of CysD, the smaller subunit, and CysN.

The enzyme catalyses sulfate + ATP + H(+) = adenosine 5'-phosphosulfate + diphosphate. The protein operates within sulfur metabolism; hydrogen sulfide biosynthesis; sulfite from sulfate: step 1/3. Its function is as follows. With CysN forms the ATP sulfurylase (ATPS) that catalyzes the adenylation of sulfate producing adenosine 5'-phosphosulfate (APS) and diphosphate, the first enzymatic step in sulfur assimilation pathway. APS synthesis involves the formation of a high-energy phosphoric-sulfuric acid anhydride bond driven by GTP hydrolysis by CysN coupled to ATP hydrolysis by CysD. This chain is Sulfate adenylyltransferase subunit 2, found in Pseudomonas syringae pv. tomato (strain ATCC BAA-871 / DC3000).